Consider the following 477-residue polypeptide: C4-dicarboxylate transport protein 1 (477 aa).

The next 8 membrane-spanning stretches (helical) occupy residues 21 to 39 (PYVQ…GHFY), 59 to 76 (MIIA…IAGM), 89 to 111 (AMVY…GNVI), 162 to 179 (ILQV…LAMV), 200 to 221 (LVGI…FTIG), 231 to 253 (LAML…LGAV), 342 to 364 (VLLL…AGFV), and 368 to 387 (ATLS…ILGV). The segment at 435 to 477 (SAGQPLITPAPSNSAASLPVESPGWSQTPDDRAAGSKQTLAGR) is disordered.

The protein belongs to the dicarboxylate/amino acid:cation symporter (DAACS) (TC 2.A.23) family.

The protein resides in the cell inner membrane. Its function is as follows. Responsible for the transport of dicarboxylates such as succinate, fumarate, and malate from the periplasm across the membrane. This transport system plays an important role in the energy supply of rhizobium-legume symbionts. This Mesorhizobium japonicum (strain LMG 29417 / CECT 9101 / MAFF 303099) (Mesorhizobium loti (strain MAFF 303099)) protein is C4-dicarboxylate transport protein 1 (dctA1).